The chain runs to 317 residues: Olfactory receptor 1B1 (317 aa).

Over 1–29 the chain is Extracellular; sequence MSFAPNASHSPVFLLLGFSRANISYTLLF. N-linked (GlcNAc...) asparagine glycans are attached at residues Asn6 and Asn22. Residues 30–50 form a helical membrane-spanning segment; that stretch reads FLFLAIYLTTILGNVTLVLLI. Topologically, residues 51–66 are cytoplasmic; that stretch reads SWDSRLHSPMYYLLRG. Residues 67-87 traverse the membrane as a helical segment; that stretch reads LSVIDMGLSTVTLPQLLAHLV. Residues 88–98 are Extracellular-facing; sequence SHYPTIPAARC. A disulfide bond links Cys98 and Cys184. The helical transmembrane segment at 99 to 119 threads the bilayer; it reads LAQFFFFYAFGVTDTLVIAVM. At 120 to 144 the chain is on the cytoplasmic side; that stretch reads ALDRYVAICDPLHYALVMNHQRCAC. Residues 145–165 form a helical membrane-spanning segment; the sequence is LLALSWVVSILHTMLRVGLVL. Over 166–201 the chain is Extracellular; it reads PLCWTGDAGGNVNLPHFFCDHRPLLRASCSDIHSNE. Residues 202-222 form a helical membrane-spanning segment; the sequence is LAIFFEGGFLMLGPCALIVLS. Residues 223–248 lie on the Cytoplasmic side of the membrane; the sequence is YVRIGAAILRLPSAAGRRRAVSTCGS. A helical membrane pass occupies residues 249-269; that stretch reads HLTMVGFLYGTIICVYFQPPF. Over 270 to 276 the chain is Extracellular; that stretch reads QNSQYQD. Residues 277 to 297 form a helical membrane-spanning segment; the sequence is MVASVMYTAITPLANPFVYSL. Residues 298 to 317 are Cytoplasmic-facing; it reads HNKDVKGALCRLLEWVKVDP.

This sequence belongs to the G-protein coupled receptor 1 family.

It is found in the cell membrane. In terms of biological role, odorant receptor. The chain is Olfactory receptor 1B1 (OR1B1) from Homo sapiens (Human).